Consider the following 104-residue polypeptide: L-rhamnose mutarotase (104 aa).

Substrate is bound at residue Y18. H22 serves as the catalytic Proton donor. Residues Y41 and 76–77 each bind substrate; that span reads WW.

The protein belongs to the rhamnose mutarotase family. Homodimer.

Its subcellular location is the cytoplasm. It catalyses the reaction alpha-L-rhamnose = beta-L-rhamnose. The protein operates within carbohydrate metabolism; L-rhamnose metabolism. Involved in the anomeric conversion of L-rhamnose. This is L-rhamnose mutarotase from Burkholderia ambifaria (strain ATCC BAA-244 / DSM 16087 / CCUG 44356 / LMG 19182 / AMMD) (Burkholderia cepacia (strain AMMD)).